Reading from the N-terminus, the 724-residue chain is Propionyl-CoA carboxylase alpha chain, mitochondrial (724 aa).

The N-terminal 48 residues, M1–S48, are a transit peptide targeting the mitochondrion. The Biotin carboxylation domain occupies T58–P505. Position 61 is an N6-acetyllysine; alternate (K61). K61 is subject to N6-succinyllysine; alternate. An N6-succinyllysine modification is found at K115. K146 bears the N6-acetyllysine; alternate mark. K146 is subject to N6-succinyllysine; alternate. K150 carries the N6-acetyllysine modification. K173 contacts ATP. An ATP-grasp domain is found at K177–K374. K184 is modified (N6-succinyllysine). K196 bears the N6-acetyllysine; alternate mark. At K196 the chain carries N6-succinyllysine; alternate. ATP-binding positions include A205–I266, E257, and N292. Phosphoserine is present on S248. The residue at position 258 (K258) is an N6-succinyllysine. K324 bears the N6-acetyllysine; alternate mark. N6-succinyllysine; alternate is present on K324. Mg(2+) contacts are provided by E332, E345, and N347. Mn(2+)-binding residues include E332, E345, and N347. Residue R349 is part of the active site. Residues K381 and K403 each carry the N6-succinyllysine modification. A biotin-binding site is contributed by F405. K492 carries the N6-acetyllysine modification. K498, K509, K554, and K644 each carry N6-succinyllysine. In terms of domain architecture, Biotinyl-binding spans F645–E724. An N6-biotinyllysine; by HLCS modification is found at K690.

As to quaternary structure, the holoenzyme is a dodecamer composed of 6 PCCA/alpha subunits and 6 PCCB/beta subunits. Interacts (via the biotin carboxylation domain) with SIRT4. Interacts with SIRT3 and SIRT5. Requires Mg(2+) as cofactor. It depends on Mn(2+) as a cofactor. The cofactor is biotin. In terms of processing, acetylated. Post-translationally, the biotin cofactor is covalently attached to the C-terminal biotinyl-binding domain and is required for the catalytic activity. Biotinylation is catalyzed by HLCS.

It is found in the mitochondrion matrix. The enzyme catalyses propanoyl-CoA + hydrogencarbonate + ATP = (S)-methylmalonyl-CoA + ADP + phosphate + H(+). The catalysed reaction is butanoyl-CoA + hydrogencarbonate + ATP = (2S)-ethylmalonyl-CoA + ADP + phosphate + H(+). It functions in the pathway metabolic intermediate metabolism; propanoyl-CoA degradation; succinyl-CoA from propanoyl-CoA: step 1/3. Functionally, this is one of the 2 subunits of the biotin-dependent propionyl-CoA carboxylase (PCC), a mitochondrial enzyme involved in the catabolism of odd chain fatty acids, branched-chain amino acids isoleucine, threonine, methionine, and valine and other metabolites. Propionyl-CoA carboxylase catalyzes the carboxylation of propionyl-CoA/propanoyl-CoA to D-methylmalonyl-CoA/(S)-methylmalonyl-CoA. Within the holoenzyme, the alpha subunit catalyzes the ATP-dependent carboxylation of the biotin carried by the biotin carboxyl carrier (BCC) domain, while the beta subunit then transfers the carboxyl group from carboxylated biotin to propionyl-CoA. Propionyl-CoA carboxylase also significantly acts on butyryl-CoA/butanoyl-CoA, which is converted to ethylmalonyl-CoA/(2S)-ethylmalonyl-CoA. Other alternative minor substrates include (2E)-butenoyl-CoA/crotonoyl-CoA. In Mus musculus (Mouse), this protein is Propionyl-CoA carboxylase alpha chain, mitochondrial.